The primary structure comprises 162 residues: Deoxyuridine 5'-triphosphate nucleotidohydrolase (162 aa).

The protein belongs to the dUTPase family. In terms of assembly, homotrimer. Mg(2+) is required as a cofactor.

Its subcellular location is the host cytoplasm. It localises to the virion. It carries out the reaction dUTP + H2O = dUMP + diphosphate + H(+). Functionally, the viral dUTPase may play a role in lowering the dUTP concentration in natural infections to minimize misincorporation of deoxyuridine into the viral DNA and ensure the fidelity of genome replication. The chain is Deoxyuridine 5'-triphosphate nucleotidohydrolase from Ornithodoros (relapsing fever ticks).